A 179-amino-acid chain; its full sequence is Transcription factor NF-E4 (179 aa).

An N6-acetyllysine modification is found at lysine 43. The disordered stretch occupies residues 100 to 179 (AMKATGPHNA…QLPSLHLSQG (80 aa)). Composition is skewed to polar residues over residues 143–153 (LSQSNPPTRIS) and 163–179 (ALEQTPQQLPSLHLSQG).

As to quaternary structure, component of the SSP (stage selector protein) complex, which appears to be a heteromer of TFCP2 and 2 copies of NFE4. Interacts with HDAC1 and PCAF. Isoform 2 interacts with TFCP2. Acetylation at Lys-43 prolongs the protein half-life by preventing ubiquitin-mediated degradation and reduces the interaction between NF-E4 and HDAC1, potentially maximizing the activating ability of the factor at the gamma-promoter. Post-translationally, ubiquitinated; leading to its degradation by the proteasome. Acetylation at Lys-43 prevents ubiquitination. As to expression, specifically expressed in fetal liver, cord blood and bone marrow. Also expressed in the K562 and HEL cell lines, which constitutively express the fetal globin genes.

The protein resides in the nucleus. Its function is as follows. Functions as part of the SSP (stage selector protein) complex, a complex that contributes to the preferential expression of the gamma-gene in fetal erythroid cells by facilitating the interaction of the gamma-globin genes with enhancer elements contained in the locus control region (LCR). The complex binds to the stage selector element (SSE) in the proximal gamma-globin promoter. In contrast, isoform 2 acts as a repressor of gamma-globin gene expression by preventing NFE2 and RNA polymerase II recruitment to the promoter. The polypeptide is Transcription factor NF-E4 (NFE4) (Homo sapiens (Human)).